A 159-amino-acid chain; its full sequence is MIKEWATVVSWQNGQALVSCDVKASCSSCASRAGCGSRVLNKLGPQTTHTIVVPCDEPLVPGQKVELGIAEGSLLSSALLVYMSPLVGLFLIASLFQLLFASDVAALCGAILGGIGGFLIARGYSRKFAARAEWQPIILSVALPPGLVRFETSSEDASQ.

The Cytoplasmic portion of the chain corresponds to 1 to 72; the sequence is MIKEWATVVS…QKVELGIAEG (72 aa). Residues 73–95 form a helical membrane-spanning segment; sequence SLLSSALLVYMSPLVGLFLIASL. The Periplasmic portion of the chain corresponds to 96 to 98; that stretch reads FQL. The chain crosses the membrane as a helical span at residues 99 to 121; sequence LFASDVAALCGAILGGIGGFLIA. Residues 122–159 are Cytoplasmic-facing; sequence RGYSRKFAARAEWQPIILSVALPPGLVRFETSSEDASQ.

The protein belongs to the RseC family.

It localises to the cell inner membrane. Its function is as follows. May play a role in reduction of the SoxR iron-sulfur cluster. May work together with the RsxABCDGE complex. The chain is Protein RseC from Escherichia coli (strain K12).